We begin with the raw amino-acid sequence, 475 residues long: MLRIYNTITKSEEVFKTLNNEEVKIYVCGPTVYDETHIGHGRTYVSFDIIRRYLEHIGYSVKLVINFTDIDDKIINRALNLNVTPKKISEKYIEIFLNDMKTLNVKPADIYPKVTENIPEIISFIDKLIEKGFAYKTDSGVYFEIEKFKDYGKLSNINLENLISEDKLESKSEKKNRFDFALWKNKKSGEPYWKSPFGDGRPGWHIECSVMSMKYLGEQFDIHGGGRDLSFPHHENEIAQSSAYSGKNWVNYWVHTGFVMVNGEKMSKSLGNFVTISEISKKYSPEVLRLFFIQRHYKSPIDYTEESMEHAKASLQKLYNVIESVRIALENPVNSVWDENEAFFYNVLKNSKINFYRAMDSDFNSVNALKTVFEVSNSVTKYLSVSKSPNVALLIKTLDFFKNVGEIFGLFEGYFYKSSNVKEESLIKFLVDLRDDLRSKKNYETSDKIRDGLKELGYQIEDSSKENTVFKKINI.

Residue cysteine 28 coordinates Zn(2+). The 'HIGH' region motif lies at proline 30 to histidine 40. Cysteine 208, histidine 233, and glutamate 237 together coordinate Zn(2+). The 'KMSKS' region signature appears at lysine 265 to serine 269. Position 268 (lysine 268) interacts with ATP.

Belongs to the class-I aminoacyl-tRNA synthetase family. It depends on Zn(2+) as a cofactor.

It localises to the cytoplasm. The catalysed reaction is tRNA(Cys) + L-cysteine + ATP = L-cysteinyl-tRNA(Cys) + AMP + diphosphate. This chain is Cysteine--tRNA ligase, found in Methanococcus vannielii (strain ATCC 35089 / DSM 1224 / JCM 13029 / OCM 148 / SB).